The chain runs to 356 residues: Methionine import ATP-binding protein MetN 1 (356 aa).

An ABC transporter domain is found at 2-241 (IELKNISVTF…PQQPLTKDFI (240 aa)). 38 to 45 (GYSGAGKS) contributes to the ATP binding site.

It belongs to the ABC transporter superfamily. Methionine importer (TC 3.A.1.24) family. As to quaternary structure, the complex is composed of two ATP-binding proteins (MetN), two transmembrane proteins (MetI) and a solute-binding protein (MetQ).

The protein resides in the cell membrane. The enzyme catalyses L-methionine(out) + ATP + H2O = L-methionine(in) + ADP + phosphate + H(+). It catalyses the reaction D-methionine(out) + ATP + H2O = D-methionine(in) + ADP + phosphate + H(+). Part of the ABC transporter complex MetNIQ involved in methionine import. Responsible for energy coupling to the transport system. The protein is Methionine import ATP-binding protein MetN 1 of Enterococcus faecalis (strain ATCC 700802 / V583).